The chain runs to 439 residues: Cytochrome b-c1 complex reductase subunit, mitochondrial (439 aa).

The N-terminal 17 residues, 1-17, are a transit peptide targeting the mitochondrion; it reads MIRGSSALKSLTSRRLY.

This sequence belongs to the peptidase M16 family. UQCRC1/QCR1 subfamily. In terms of assembly, component of the ubiquinol-cytochrome c oxidoreductase (cytochrome b-c1 complex, complex III, CIII), a multisubunit enzyme composed of 10 subunits. The complex is composed of 3 respiratory subunits cytochrome b (COB), cytochrome c1 (CYT1) and Rieske protein (RIP1), 2 core protein subunits COR1 and QCR2, and 5 low-molecular weight protein subunits QCR6, QCR7, QCR8, QCR9 and QCR10. The complex exists as an obligatory dimer and forms supercomplexes (SCs) in the inner mitochondrial membrane with a monomer or a dimer of cytochrome c oxidase (complex IV, CIV), resulting in 2 different assemblies (supercomplexes III(2)IV and III(2)IV(2)).

The protein resides in the mitochondrion inner membrane. In terms of biological role, component of the ubiquinol-cytochrome c oxidoreductase, a multisubunit transmembrane complex that is part of the mitochondrial electron transport chain which drives oxidative phosphorylation. The complex plays an important role in the uptake of multiple carbon sources present in different host niches. The polypeptide is Cytochrome b-c1 complex reductase subunit, mitochondrial (Candida albicans (strain SC5314 / ATCC MYA-2876) (Yeast)).